A 537-amino-acid chain; its full sequence is Fucosyltransferase 6 (537 aa).

Topologically, residues 1-20 (MYHIFQISSEVFRAFGLKMK) are cytoplasmic. A helical; Signal-anchor for type II membrane protein transmembrane segment spans residues 21–41 (ILLTLVFSGLLIWSVVLVSFS). Residues 42–537 (NDFNNQLLVA…NDGLKLFDEL (496 aa)) lie on the Lumenal side of the membrane. N-linked (GlcNAc...) asparagine glycans are attached at residues N54, N231, and N378.

It belongs to the glycosyltransferase 37 family. Expressed in roots and flowers.

The protein resides in the golgi apparatus. Its subcellular location is the golgi stack membrane. It functions in the pathway protein modification; protein glycosylation. In terms of biological role, may be involved in cell wall biosynthesis. May act as a fucosyltransferase. The protein is Fucosyltransferase 6 (FUT6) of Arabidopsis thaliana (Mouse-ear cress).